The following is a 236-amino-acid chain: uncharacterized protein (236 aa).

This is an uncharacterized protein from Saccharolobus islandicus (Sulfolobus islandicus).